We begin with the raw amino-acid sequence, 448 residues long: Methionine aminopeptidase 2-1 (448 aa).

Residues 1 to 90 (MAAQASEKLE…PPRVPVSSLF (90 aa)) form a disordered region. Residues 22-33 (AAGPAKAGQADA) show a composition bias toward low complexity. The span at 34 to 46 (GEVEDESDDDADD) shows a compositional bias: acidic residues. The span at 47–58 (AGAAADGAANGA) shows a compositional bias: low complexity. Residues 59–74 (AKKKKKRKSKKKKKGG) show a composition bias toward basic residues. Residues 75 to 88 (AKVQSSPPRVPVSS) are compositionally biased toward low complexity. Residue histidine 198 coordinates substrate. A divalent metal cation contacts are provided by aspartate 218, aspartate 229, and histidine 301. Histidine 309 is a substrate binding site. Glutamate 334 and glutamate 429 together coordinate a divalent metal cation.

It belongs to the peptidase M24A family. Methionine aminopeptidase eukaryotic type 2 subfamily. Requires Co(2+) as cofactor. Zn(2+) serves as cofactor. Mn(2+) is required as a cofactor. It depends on Fe(2+) as a cofactor.

Its subcellular location is the cytoplasm. It carries out the reaction Release of N-terminal amino acids, preferentially methionine, from peptides and arylamides.. In terms of biological role, cotranslationally removes the N-terminal methionine from nascent proteins. The N-terminal methionine is often cleaved when the second residue in the primary sequence is small and uncharged (Met-Ala-, Cys, Gly, Pro, Ser, Thr, or Val). In Emericella nidulans (strain FGSC A4 / ATCC 38163 / CBS 112.46 / NRRL 194 / M139) (Aspergillus nidulans), this protein is Methionine aminopeptidase 2-1.